A 344-amino-acid chain; its full sequence is Ribosomal RNA large subunit methyltransferase Cfr (344 aa).

Residue Glu90 is the Proton acceptor of the active site. Residues 97–330 (KQGWESFCIS…ATVRTQFGSE (234 aa)) form the Radical SAM core domain. The cysteines at positions 104 and 335 are disulfide-linked. [4Fe-4S] cluster contacts are provided by Cys111, Cys115, and Cys118. Residues 157–158 (GE), Ser188, 211–213 (SLH), and Asn292 each bind S-adenosyl-L-methionine. The active-site S-methylcysteine intermediate is the Cys335.

This sequence belongs to the radical SAM superfamily. RlmN family. Cfr subfamily. The cofactor is [4Fe-4S] cluster.

Its subcellular location is the cytoplasm. The catalysed reaction is adenosine(2503) in 23S rRNA + 2 reduced [2Fe-2S]-[ferredoxin] + 2 S-adenosyl-L-methionine = 8-methyladenosine(2503) in 23S rRNA + 5'-deoxyadenosine + L-methionine + 2 oxidized [2Fe-2S]-[ferredoxin] + S-adenosyl-L-homocysteine. In terms of biological role, specifically methylates position 8 of adenine 2503 in 23S rRNA. Confers resistance to some classes of antibiotics. The sequence is that of Ribosomal RNA large subunit methyltransferase Cfr from Clostridium botulinum (strain Hall / ATCC 3502 / NCTC 13319 / Type A).